Here is a 449-residue protein sequence, read N- to C-terminus: Phosphoglucosamine mutase (449 aa).

Ser-104 functions as the Phosphoserine intermediate in the catalytic mechanism. Residues Ser-104, Asp-243, Asp-245, and Asp-247 each contribute to the Mg(2+) site. A Phosphoserine modification is found at Ser-104.

This sequence belongs to the phosphohexose mutase family. The cofactor is Mg(2+). Activated by phosphorylation.

The catalysed reaction is alpha-D-glucosamine 1-phosphate = D-glucosamine 6-phosphate. Catalyzes the conversion of glucosamine-6-phosphate to glucosamine-1-phosphate. The sequence is that of Phosphoglucosamine mutase from Xanthomonas oryzae pv. oryzae (strain PXO99A).